We begin with the raw amino-acid sequence, 564 residues long: Sulfite reductase [NADPH] hemoprotein beta-component 2 (564 aa).

The [4Fe-4S] cluster site is built by Cys-426, Cys-432, Cys-471, and Cys-475. Cys-475 contacts siroheme.

This sequence belongs to the nitrite and sulfite reductase 4Fe-4S domain family. As to quaternary structure, alpha(8)-beta(8). The alpha component is a flavoprotein, the beta component is a hemoprotein. Siroheme is required as a cofactor. Requires [4Fe-4S] cluster as cofactor.

It carries out the reaction hydrogen sulfide + 3 NADP(+) + 3 H2O = sulfite + 3 NADPH + 4 H(+). It functions in the pathway sulfur metabolism; hydrogen sulfide biosynthesis; hydrogen sulfide from sulfite (NADPH route): step 1/1. Component of the sulfite reductase complex that catalyzes the 6-electron reduction of sulfite to sulfide. This is one of several activities required for the biosynthesis of L-cysteine from sulfate. The polypeptide is Sulfite reductase [NADPH] hemoprotein beta-component 2 (Klebsiella pneumoniae (strain 342)).